Consider the following 34-residue polypeptide: MSDINTARLPFYQFPDFKYPCVGDDIEMVLARGE.

Positions 1 to 10 (MSDINTARLP) are excised as a propeptide. The segment at residues 11-20 (FYQFPDFKYP) is a cross-link (cyclopeptide (Phe-Pro)). Positions 21–34 (CVGDDIEMVLARGE) are excised as a propeptide.

This sequence belongs to the MSDIN fungal toxin family. Post-translationally, processed by the macrocyclase-peptidase enzyme POPB to yield a toxic cyclic decapeptide. POPB first removes 10 residues from the N-terminus. Conformational trapping of the remaining peptide forces the enzyme to release this intermediate rather than proceed to macrocyclization. The enzyme rebinds the remaining peptide in a different conformation and catalyzes macrocyclization of the N-terminal 10 residues.

In terms of biological role, probable toxin that belongs to the MSDIN-like toxin family responsible for a large number of food poisoning cases and deaths. This is MSDIN-like toxin proprotein 2 from Amanita bisporigera (Destroying angel).